Reading from the N-terminus, the 626-residue chain is tRNA uridine 5-carboxymethylaminomethyl modification enzyme MnmG (626 aa).

13–18 (GGGHAG) contributes to the FAD binding site. 273-287 (GPRYCPSIEDKIHRF) is a binding site for NAD(+).

It belongs to the MnmG family. In terms of assembly, homodimer. Heterotetramer of two MnmE and two MnmG subunits. It depends on FAD as a cofactor.

Its subcellular location is the cytoplasm. NAD-binding protein involved in the addition of a carboxymethylaminomethyl (cmnm) group at the wobble position (U34) of certain tRNAs, forming tRNA-cmnm(5)s(2)U34. The polypeptide is tRNA uridine 5-carboxymethylaminomethyl modification enzyme MnmG (Acinetobacter baylyi (strain ATCC 33305 / BD413 / ADP1)).